Consider the following 561-residue polypeptide: Lysine--tRNA ligase (561 aa).

The Mg(2+) site is built by E409 and E416.

This sequence belongs to the class-II aminoacyl-tRNA synthetase family. Homodimer. It depends on Mg(2+) as a cofactor.

It is found in the cytoplasm. It catalyses the reaction tRNA(Lys) + L-lysine + ATP = L-lysyl-tRNA(Lys) + AMP + diphosphate. The chain is Lysine--tRNA ligase from Trichormus variabilis (strain ATCC 29413 / PCC 7937) (Anabaena variabilis).